We begin with the raw amino-acid sequence, 504 residues long: Maturase K (504 aa).

Belongs to the intron maturase 2 family. MatK subfamily.

The protein localises to the plastid. It is found in the chloroplast. In terms of biological role, usually encoded in the trnK tRNA gene intron. Probably assists in splicing its own and other chloroplast group II introns. This Nepenthes alata (Winged pitcher plant) protein is Maturase K.